Consider the following 294-residue polypeptide: MTKTYRISSGLLREAVKKITIARDSAFFVDKEILSKSSELKNSLINPCHNVVREFVRESRDCDSDDYKREYRLNDYRLELTQPPSNISRGVIVVKTVRRWELINQKYNADLWIPPAKKGVVITPDIIDKLYLFWDNFLGSYEKEGINRKQNTDPVSKGKVFDLLASRSSNNTNQTPEELREIQTQIEHLTIHFDEGSVHESAGQLKGKFFNKDRQSARDYLLDKLKDDKDKDIVRGMGTYTLECVAIHVLSKLFNVFSLEKTSVLAAALISELDITAKTEYNNALLAKMQREKE.

It localises to the mitochondrion. This is an uncharacterized protein from Zea mays (Maize).